A 78-amino-acid chain; its full sequence is Large ribosomal subunit protein bL28 (78 aa).

Residues 1–21 form a disordered region; it reads MSRVCQVTGKSPITGNNVSHA. The span at 8 to 21 shows a compositional bias: polar residues; the sequence is TGKSPITGNNVSHA.

This sequence belongs to the bacterial ribosomal protein bL28 family.

This Hahella chejuensis (strain KCTC 2396) protein is Large ribosomal subunit protein bL28.